A 126-amino-acid polypeptide reads, in one-letter code: Small ribosomal subunit protein uS12 (126 aa).

The interval 1–26 (MPTINQLVRKGRASETTKSKSPALQD) is disordered. Position 89 is a 3-methylthioaspartic acid (Asp-89). The segment at 103–126 (DTQGVKDRKQARSKYGAKRAKAGK) is disordered. Positions 113–126 (ARSKYGAKRAKAGK) are enriched in basic residues.

This sequence belongs to the universal ribosomal protein uS12 family. Part of the 30S ribosomal subunit. Contacts proteins S8 and S17. May interact with IF1 in the 30S initiation complex.

In terms of biological role, with S4 and S5 plays an important role in translational accuracy. Its function is as follows. Interacts with and stabilizes bases of the 16S rRNA that are involved in tRNA selection in the A site and with the mRNA backbone. Located at the interface of the 30S and 50S subunits, it traverses the body of the 30S subunit contacting proteins on the other side and probably holding the rRNA structure together. The combined cluster of proteins S8, S12 and S17 appears to hold together the shoulder and platform of the 30S subunit. The protein is Small ribosomal subunit protein uS12 of Paraburkholderia xenovorans (strain LB400).